Consider the following 119-residue polypeptide: C-X-C motif chemokine 17 (119 aa).

The N-terminal stretch at 1-21 (MKVLISSLLLLLPLMLMSMVS) is a signal peptide. 2 cysteine pairs are disulfide-bonded: Cys75/Cys103 and Cys77/Cys110. Positions 81 to 100 (KGNVKKTRHQRHHRKPNKHS) are disordered. A compositionally biased stretch (basic residues) spans 82 to 100 (GNVKKTRHQRHHRKPNKHS).

This sequence belongs to the intercrine alpha (chemokine CxC) family. Likely to undergo an endoproteolytic process to form a four-cysteine-containing mature peptide with a canonical CXC chemokine scaffold after secretion. In terms of tissue distribution, detected in trachea, stomach, lung and skeletal muscle. Detected in intestine and in normal and asthmatic lung (at protein level). Breast tumors showed 3- to 24-fold up-regulation.

The protein localises to the secreted. Chemokine that acts as a chemoattractant for monocytes, macrophages and dendritic cells. Plays a role in angiogenesis and possibly in the development of tumors. Acts as an anti-inflammatory in the stomach. May play a role in the innate defense against infections. Activates the C-X-C chemokine receptor GPR35 to induce a rapid and transient rise in the level of intracellular calcium ions. In terms of biological role, seems to exhibit much higher chemoattractant potency on monocytes and macrophages than 6-Cys CXCL17. This is C-X-C motif chemokine 17 (CXCL17) from Homo sapiens (Human).